The chain runs to 591 residues: 4-coumarate--CoA ligase-like 3 (591 aa).

Positions 228, 229, 230, 231, 232, and 236 each coordinate ATP. Y280 is a binding site for (E)-4-coumaroyl-AMP. R301 contributes to the CoA binding site. Residues 303–375 are SBD1; that stretch reads DAGDAVAAIG…QAFPHVDFIQ (73 aa). Positions 353, 375, 376, and 380 each coordinate (E)-4-coumaroyl-AMP. ATP is bound by residues Q375, G376, T380, D459, and R474. Positions 376–440 are SBD2; it reads GYGMTESTAV…LHGPGIMKGY (65 aa). (E)-4-coumaroyl-AMP contacts are provided by K476 and K480. The CoA site is built by K482 and G483. K565 provides a ligand contact to ATP.

It belongs to the ATP-dependent AMP-binding enzyme family. Requires Mg(2+) as cofactor.

It catalyses the reaction (E)-4-coumarate + ATP + CoA = (E)-4-coumaroyl-CoA + AMP + diphosphate. The enzyme catalyses (E)-4-coumarate + ATP + H(+) = (E)-4-coumaroyl-AMP + diphosphate. The catalysed reaction is (E)-4-coumaroyl-AMP + CoA = (E)-4-coumaroyl-CoA + AMP + H(+). Its function is as follows. Carboxylate--CoA ligase that may use 4-coumarate as substrate. Follows a two-step reaction mechanism, wherein the carboxylate substrate first undergoes adenylation by ATP, followed by a thioesterification in the presence of CoA to yield the final CoA thioester. This Oryza sativa subsp. japonica (Rice) protein is 4-coumarate--CoA ligase-like 3 (4CLL3).